We begin with the raw amino-acid sequence, 322 residues long: NADH-quinone oxidoreductase subunit H (322 aa).

Helical transmembrane passes span 14–34 (IFMH…YMSF), 81–101 (YIFV…IPVI), 114–134 (VGVL…LLAG), 149–169 (SIAQ…GIVA), 186–206 (LWNI…GMAL), 237–257 (FFIS…TLFF), 265–285 (FPPV…FVLI), and 302–322 (WKFL…YILI).

It belongs to the complex I subunit 1 family. As to quaternary structure, NDH-1 is composed of 13 different subunits. Subunits NuoA, H, J, K, L, M, N constitute the membrane sector of the complex.

The protein localises to the cell inner membrane. The enzyme catalyses a quinone + NADH + 5 H(+)(in) = a quinol + NAD(+) + 4 H(+)(out). Functionally, NDH-1 shuttles electrons from NADH, via FMN and iron-sulfur (Fe-S) centers, to quinones in the respiratory chain. The immediate electron acceptor for the enzyme in this species is believed to be ubiquinone. Couples the redox reaction to proton translocation (for every two electrons transferred, four hydrogen ions are translocated across the cytoplasmic membrane), and thus conserves the redox energy in a proton gradient. This subunit may bind ubiquinone. This Blochmanniella floridana protein is NADH-quinone oxidoreductase subunit H.